The following is an 870-amino-acid chain: Importin subunit beta-1 (870 aa).

A2 carries the post-translational modification N-acetylalanine. HEAT repeat units lie at residues 4-33, 35-67, 87-126, 132-161, 172-204, 214-249, 255-304, 313-361, 365-395, 403-440, 456-492, 498-535, 542-588, 596-637, 642-679, 684-722, 730-776, and 826-868; these read EVTQ…FQEQ, LAGF…KNAL, MSTK…ELPQ, LIVS…LCEE, VNKI…YMAL, DMER…IAST, AHYM…EFAG, FTKQ…RAVG, VPHV…GSIL, LMAI…IFEF, CQQI…EDIG, TPFF…EVVR, STMV…QVII, TKSK…AYAA, AKYM…CRAL, LPYC…ALAI, WRYS…FQGF, and SHVG…TRAI. The region spanning 23 to 103 is the Importin N-terminal domain; it reads AEESLKQFQE…RAFLLKTLSA (81 aa).

This sequence belongs to the importin beta family. Importin beta-1 subfamily. As to quaternary structure, forms a complex with the importin subunits alpha IMPA1 or IMPA2, the nucleoporin NUP62 and the Ran-GTP-binding proteins RAN1, RAN2 or RAN3. As to expression, expressed in roots, cotyledons, leaves, stems, petals, stamen, stigma, siliques, embryos and guard cells.

It localises to the cytoplasm. Its subcellular location is the nucleus. In terms of biological role, acts as a negative effector of drought tolerance. Involved in the regulation of stomatal closure and in the abscisic acid (ABA)-mediated pathway that lead to drought tolerance. Does not directly mediate nuclear import of ABI1 and ABI2 which are key regulators of the ABA signaling pathway. May be involved in nuclear translocation of other type 2C protein phosphatases that mediate ABA signaling. This chain is Importin subunit beta-1, found in Arabidopsis thaliana (Mouse-ear cress).